The sequence spans 146 residues: Allograft inflammatory factor 1 (146 aa).

Ser1 carries the post-translational modification N-acetylserine. Lys10 is modified (N6-acetyllysine). Ser38 carries the post-translational modification Phosphoserine. The region spanning 44-79 is the EF-hand 1 domain; the sequence is RKLEAFKQKYMEFDLNGNGDIDIMSLKRMLEKLGVP. Ca(2+)-binding residues include Asp57, Asn59, Asn61, Asp63, and Thr99. Residues 81-115 enclose the EF-hand 2; degenerate domain; that stretch reads THLELKKLIKEVSSGSGETFSYSIFLKMMLGKRSA. Residues 127–146 form a disordered region; that stretch reads AREQEKPTGPPAKKAISELP.

In terms of assembly, homodimer (Potential). Monomer. Interacts with LCP1. Microglial cells in the central nervous system and dendritic cells and macrophages in several organs.

The protein localises to the cytoplasm. Its subcellular location is the cytoskeleton. The protein resides in the cell projection. It localises to the ruffle membrane. It is found in the phagocytic cup. Functionally, actin-binding protein that enhances membrane ruffling and RAC activation. Enhances the actin-bundling activity of LCP1. Binds calcium. Plays a role in RAC signaling and in phagocytosis. May play a role in macrophage activation and function. Promotes the proliferation of vascular smooth muscle cells and of T-lymphocytes. Enhances lymphocyte migration. Plays a role in vascular inflammation. Has a dual influence on glucose-induced insulin secretion: inhibition at low concentration and stimulation at high concentrations. The sequence is that of Allograft inflammatory factor 1 (AIF1) from Sus scrofa (Pig).